Here is a 41-residue protein sequence, read N- to C-terminus: trp operon leader peptide (41 aa).

Functionally, this protein is involved in control of the biosynthesis of tryptophan. This is trp operon leader peptide (trpL) from Vibrio parahaemolyticus serotype O3:K6 (strain RIMD 2210633).